Consider the following 519-residue polypeptide: Bifunctional dihydrofolate reductase-thymidylate synthase 1 (519 aa).

Alanine 2 carries the post-translational modification N-acetylalanine. The DHFR domain maps to 21-198 (TYQVVVAATK…LRFCFTTFVR (178 aa)). Valine 25 is a binding site for substrate. NADP(+)-binding positions include alanine 27 and 33–39 (GIGKDGK). Residue aspartate 47 participates in substrate binding. Residues 71–73 (RKT) and 92–95 (LTRS) each bind NADP(+). Residue isoleucine 134 coordinates substrate. 135–142 (GGGDILRE) contacts NADP(+). Threonine 155 is a binding site for substrate. Residues 201 to 234 (SSADESSDESNGSQSLQFDGKKFLFLPKMVFDQH) form a hinge region. The thymidylate synthase stretch occupies residues 235 to 519 (EEFLYLNMVE…HKKIEMKMAV (285 aa)). DUMP is bound at residue arginine 256. Residue cysteine 401 is part of the active site. DUMP is bound by residues histidine 402, 420–424 (QRSAD), asparagine 432, and 462–464 (HVY).

It in the N-terminal section; belongs to the dihydrofolate reductase family. The protein in the C-terminal section; belongs to the thymidylate synthase family. In terms of assembly, heterodimer or homodimer.

The catalysed reaction is (6S)-5,6,7,8-tetrahydrofolate + NADP(+) = 7,8-dihydrofolate + NADPH + H(+). It carries out the reaction dUMP + (6R)-5,10-methylene-5,6,7,8-tetrahydrofolate = 7,8-dihydrofolate + dTMP. It participates in cofactor biosynthesis; tetrahydrofolate biosynthesis; 5,6,7,8-tetrahydrofolate from 7,8-dihydrofolate: step 1/1. Functionally, bifunctional enzyme. Involved in de novo dTMP biosynthesis. Key enzyme in folate metabolism. Can play two different roles depending on the source of dihydrofolate: de novo synthesis of tetrahydrofolate or recycling of the dihydrofolate released as one of the end products of the TS catalyzed reaction. Catalyzes an essential reaction for de novo glycine and purine synthesis, DNA precursor synthesis, and for the conversion of dUMP to dTMP. The sequence is that of Bifunctional dihydrofolate reductase-thymidylate synthase 1 (THY-1) from Arabidopsis thaliana (Mouse-ear cress).